A 105-amino-acid polypeptide reads, in one-letter code: Plastocyanin (105 aa).

In terms of domain architecture, Plastocyanin-like spans Glu-1–Gly-105. The Cu(2+) site is built by His-39, Cys-89, His-92, and Met-97.

Belongs to the plastocyanin family. Requires Cu(2+) as cofactor.

Its subcellular location is the cellular thylakoid membrane. Its function is as follows. Participates in electron transfer between P700 and the cytochrome b6-f complex in photosystem I. In Anabaena variabilis, this protein is Plastocyanin (petE).